The sequence spans 425 residues: Histidine--tRNA ligase 1 (425 aa).

This sequence belongs to the class-II aminoacyl-tRNA synthetase family. Homodimer.

The protein resides in the cytoplasm. It carries out the reaction tRNA(His) + L-histidine + ATP = L-histidyl-tRNA(His) + AMP + diphosphate + H(+). The chain is Histidine--tRNA ligase 1 from Bacillus anthracis.